A 213-amino-acid polypeptide reads, in one-letter code: ATP synthase peripheral stalk subunit OSCP, mitochondrial (213 aa).

The transit peptide at 1–23 directs the protein to the mitochondrion; sequence MAAPAVSGLSRQVRYFSTSVVRP. The SIFI-degron motif lies at 5-23; sequence AVSGLSRQVRYFSTSVVRP. An N6-acetyllysine mark is found at lysine 54, lysine 60, lysine 70, and lysine 73. Lysine 90 carries the N6-succinyllysine modification. Lysine 158 and lysine 162 each carry N6-acetyllysine; alternate. An N6-succinyllysine; alternate mark is found at lysine 158 and lysine 162. N6-acetyllysine is present on residues lysine 172, lysine 176, and lysine 192. An N6-succinyllysine modification is found at lysine 199.

This sequence belongs to the ATPase delta chain family. Component of the ATP synthase complex composed at least of ATP5F1A/subunit alpha, ATP5F1B/subunit beta, ATP5MC1/subunit c (homooctomer), MT-ATP6/subunit a, MT-ATP8/subunit 8, ATP5ME/subunit e, ATP5MF/subunit f, ATP5MG/subunit g, ATP5MK/subunit k, ATP5MJ/subunit j, ATP5F1C/subunit gamma, ATP5F1D/subunit delta, ATP5F1E/subunit epsilon, ATP5PF/subunit F6, ATP5PB/subunit b, ATP5PD/subunit d, ATP5PO/subunit OSCP. ATP synthase complex consists of a soluble F(1) head domain (subunits alpha(3) and beta(3)) - the catalytic core - and a membrane F(0) domain - the membrane proton channel (subunits c, a, 8, e, f, g, k and j). These two domains are linked by a central stalk (subunits gamma, delta, and epsilon) rotating inside the F1 region and a stationary peripheral stalk (subunits F6, b, d, and OSCP). In terms of processing, acetylation at Lys-162 decreases ATP production. Deacetylated by SIRT3. In response to mitochondrial stress, the precursor protein is ubiquitinated by the SIFI complex in the cytoplasm before mitochondrial import, leading to its degradation. Within the SIFI complex, UBR4 initiates ubiquitin chain that are further elongated or branched by KCMF1.

It is found in the mitochondrion. It localises to the mitochondrion inner membrane. Its function is as follows. Subunit OSCP, of the mitochondrial membrane ATP synthase complex (F(1)F(0) ATP synthase or Complex V) that produces ATP from ADP in the presence of a proton gradient across the membrane which is generated by electron transport complexes of the respiratory chain. ATP synthase complex consist of a soluble F(1) head domain - the catalytic core - and a membrane F(1) domain - the membrane proton channel. These two domains are linked by a central stalk rotating inside the F(1) region and a stationary peripheral stalk. During catalysis, ATP synthesis in the catalytic domain of F(1) is coupled via a rotary mechanism of the central stalk subunits to proton translocation. In vivo, can only synthesize ATP although its ATP hydrolase activity can be activated artificially in vitro. Part of the complex F(0) domain. Part of the complex F(0) domain and the peripheric stalk, which acts as a stator to hold the catalytic alpha(3)beta(3) subcomplex and subunit a/ATP6 static relative to the rotary elements. The sequence is that of ATP synthase peripheral stalk subunit OSCP, mitochondrial from Plecturocebus moloch (Dusky titi monkey).